The primary structure comprises 479 residues: Chromosomal replication initiator protein DnaA (479 aa).

Residues 1 to 74 form a domain I, interacts with DnaA modulators region; it reads MFSGVVMAWQ…RSLTGVDSSI (74 aa). The domain II stretch occupies residues 74–142; it reads ITDVRFLEKK…SVPKNNASIR (69 aa). The tract at residues 143–360 is domain III, AAA+ region; the sequence is ALHPRYTFDE…SAITAIGARA (218 aa). Positions 187, 189, 190, and 191 each coordinate ATP. Residues 361-479 are domain IV, binds dsDNA; that stretch reads RLMGGYIDMN…NLLSDKVKQI (119 aa).

This sequence belongs to the DnaA family. As to quaternary structure, oligomerizes as a right-handed, spiral filament on DNA at oriC.

Its subcellular location is the cytoplasm. Its function is as follows. Plays an essential role in the initiation and regulation of chromosomal replication. ATP-DnaA binds to the origin of replication (oriC) to initiate formation of the DNA replication initiation complex once per cell cycle. Binds the DnaA box (a 9 base pair repeat at the origin) and separates the double-stranded (ds)DNA. Forms a right-handed helical filament on oriC DNA; dsDNA binds to the exterior of the filament while single-stranded (ss)DNA is stabiized in the filament's interior. The ATP-DnaA-oriC complex binds and stabilizes one strand of the AT-rich DNA unwinding element (DUE), permitting loading of DNA polymerase. After initiation quickly degrades to an ADP-DnaA complex that is not apt for DNA replication. Binds acidic phospholipids. The protein is Chromosomal replication initiator protein DnaA of Desulfotalea psychrophila (strain LSv54 / DSM 12343).